The sequence spans 163 residues: Nucleotide-binding protein HAPS_2236 (163 aa).

The protein belongs to the YajQ family.

Its function is as follows. Nucleotide-binding protein. This chain is Nucleotide-binding protein HAPS_2236, found in Glaesserella parasuis serovar 5 (strain SH0165) (Haemophilus parasuis).